The following is a 542-amino-acid chain: Chaperonin GroEL 1 (542 aa).

ATP contacts are provided by residues 30–33, lysine 51, 87–91, glycine 415, and aspartate 496; these read TLGP and DGTTT.

The protein belongs to the chaperonin (HSP60) family. Forms a cylinder of 14 subunits composed of two heptameric rings stacked back-to-back. Interacts with the co-chaperonin GroES.

It localises to the cytoplasm. It catalyses the reaction ATP + H2O + a folded polypeptide = ADP + phosphate + an unfolded polypeptide.. Functionally, together with its co-chaperonin GroES, plays an essential role in assisting protein folding. The GroEL-GroES system forms a nano-cage that allows encapsulation of the non-native substrate proteins and provides a physical environment optimized to promote and accelerate protein folding. The polypeptide is Chaperonin GroEL 1 (Sinorhizobium fredii (strain NBRC 101917 / NGR234)).